A 211-amino-acid chain; its full sequence is Endonuclease Htp3 (211 aa).

The signal sequence occupies residues 1-20 (MLEVPVWIPILAFAVGLGLG). The short motif at 48-51 (RTLR) is the RxLR element. The 151-residue stretch at 48-198 (RTLRGKVVSV…REKRVNIWSL (151 aa)) folds into the TNase-like domain. Position 77 (Asp77) interacts with Ca(2+). Arg90 is an active-site residue. Asp95 contributes to the Ca(2+) binding site. Active-site residues include Glu98 and Arg138. Asn153 is a glycosylation site (N-linked (GlcNAc...) asparagine). The binding to the host cell surface stretch occupies residues 200 to 211 (KRETPAQYKARK).

In the N-terminal section; belongs to the RxLR effector family. It in the C-terminal section; belongs to the LCL3 family. In terms of assembly, interacts with the host cell surface endoplasmin gp96, in order to get translocated into to host cell. Interacts with the effector Htp1, in order to get released from vesicles into the host cytosol.

It localises to the secreted. Its subcellular location is the host cytoplasm. The protein localises to the host cytosol. The nuclease activity shows a general salt dependency with a clear reduction by magnesium and sulfate ions. Its function is as follows. Effector involved in the disease saprolegniosis in salmonids and other freshwater fish, resulting in considerable economic losses in aquaculture. Within the host fish cells, Htp3 is released from vesicles into host cytosol where it degrades nucleic acids. This chain is Endonuclease Htp3 (HTP3), found in Saprolegnia parasitica (strain CBS 223.65).